The chain runs to 353 residues: Melatonin receptor type 1A (353 aa).

The segment covering 1–15 (MKGNGSTLLNASQQA) has biased composition (polar residues). The segment at 1–23 (MKGNGSTLLNASQQAPGVGEGGG) is disordered. Over 1 to 32 (MKGNGSTLLNASQQAPGVGEGGGPRPSWLAST) the chain is Extracellular. 2 N-linked (GlcNAc...) asparagine glycosylation sites follow: asparagine 4 and asparagine 10. Residues 33–53 (LAFILIFTIVVDILGNLLVIL) traverse the membrane as a helical segment. At 54-66 (SVYRNKKLRNAGN) the chain is on the cytoplasmic side. The helical transmembrane segment at 67-87 (IFVVSLAIADLVVAIYPYPLV) threads the bilayer. Residues 88-105 (LTSIFNNGWNLGYLHCQI) lie on the Extracellular side of the membrane. A disulfide bridge connects residues cysteine 103 and cysteine 180. The helical transmembrane segment at 106–126 (SAFLMGLSVIGSIFNITGIAI) threads the bilayer. Topologically, residues 127 to 147 (NRYCYICHSLKYDRLYSNKNS) are cytoplasmic. Residues 148-168 (LCYVFLIWVLTLVAIMPNLQT) form a helical membrane-spanning segment. Over 169–190 (GTLQYDPRIYSCTFTQSVSSAY) the chain is Extracellular. A helical membrane pass occupies residues 191–211 (TIAVVVFHFIVPMIIVIFCYL). Over 212–243 (RIWILVLQVRRRVKPDSKPRLKPQDFRNFVTM) the chain is Cytoplasmic. A helical transmembrane segment spans residues 244-264 (FVVFVLFAICWAPLNFIGLIV). Over 265-277 (ASDPATMAPRIPE) the chain is Extracellular. The helical transmembrane segment at 278-298 (WLFVASYYMAYFNSCLNAIIY) threads the bilayer. Residues 299–353 (GLLNQNFRQEYKRILVSLFTAKMCFVDSSNDPADKIKCKPAPLIANNNLIKVDSV) lie on the Cytoplasmic side of the membrane.

It belongs to the G-protein coupled receptor 1 family. In terms of tissue distribution, at least in the brain, more precisely in the pars tuberalis and the suprachiasmatic nucleus.

It localises to the cell membrane. Its function is as follows. High affinity receptor for melatonin. Likely to mediate the reproductive and circadian actions of melatonin. The activity of this receptor is mediated by pertussis toxin sensitive G proteins that inhibit adenylate cyclase activity. Possibly involved in sleep induction, by melatonin activation of the potassium channel KCNMA1/BK and the dissociation of G-beta and G-gamma subunits, thereby decreasing synaptic transmission. This Phodopus sungorus (Striped hairy-footed hamster) protein is Melatonin receptor type 1A (MTNR1A).